The primary structure comprises 78 residues: Keratin-associated protein 6-5 (78 aa).

Residues glycine 3–tyrosine 76 are 25 X 2 AA repeats of G-[YCGS].

It belongs to the KRTAP type 6 family. In terms of assembly, interacts with hair keratins. In terms of tissue distribution, strong expression in narrowly defined pattern restricted to the lower and middle cortical regions of the hair shaft in both developing and cycling hair. During hair follicle regression (catagen), expression levels decrease until expression is no longer detectable in follicles at resting stage (telogen).

In the hair cortex, hair keratin intermediate filaments are embedded in an interfilamentous matrix, consisting of hair keratin-associated proteins (KRTAP), which are essential for the formation of a rigid and resistant hair shaft through their extensive disulfide bond cross-linking with abundant cysteine residues of hair keratins. The matrix proteins include the high-sulfur and high-glycine-tyrosine keratins. In Mus musculus (Mouse), this protein is Keratin-associated protein 6-5 (Krtap6-5).